Reading from the N-terminus, the 208-residue chain is FMN-dependent NADH:quinone oxidoreductase (208 aa).

Residues 17-19 (SNS), 99-102 (MWNL), and 143-146 (SRGG) each bind FMN.

Belongs to the azoreductase type 1 family. In terms of assembly, homodimer. The cofactor is FMN.

The enzyme catalyses 2 a quinone + NADH + H(+) = 2 a 1,4-benzosemiquinone + NAD(+). It catalyses the reaction N,N-dimethyl-1,4-phenylenediamine + anthranilate + 2 NAD(+) = 2-(4-dimethylaminophenyl)diazenylbenzoate + 2 NADH + 2 H(+). Functionally, quinone reductase that provides resistance to thiol-specific stress caused by electrophilic quinones. Also exhibits azoreductase activity. Catalyzes the reductive cleavage of the azo bond in aromatic azo compounds to the corresponding amines. The chain is FMN-dependent NADH:quinone oxidoreductase from Staphylococcus haemolyticus (strain JCSC1435).